The primary structure comprises 736 residues: Factor of DNA methylation 4 (736 aa).

Composition is skewed to basic and acidic residues over residues 80 to 90 (RKYLRPRERPR) and 144 to 167 (DSGR…SNED). The tract at residues 80 to 167 (RKYLRPRERP…KPDPFFSNED (88 aa)) is disordered. Positions 360-597 (TLVSNLENTL…RSMRELTTRA (238 aa)) form a coiled coil.

Functionally, acts in association with FDM3 and FDM5 for RNA-directed DNA methylation (RdDM). The chain is Factor of DNA methylation 4 from Arabidopsis thaliana (Mouse-ear cress).